An 849-amino-acid chain; its full sequence is Membrane protein-large ribosomal subunit bL9 fusion protein (849 aa).

The segment at 1–680 (MFSKNKHNTK…TQLEGTNIKT (680 aa)) is unknown. 2 helical membrane-spanning segments follow: residues 11-31 (FIVIACVIVVLILILFCLDFQ) and 64-84 (IIFFIFNFFGKIILASFVISF). In terms of domain architecture, GGDEF spans 214–342 (KTLALAMITF…GGDQVVVNIE (129 aa)). Positions 681–849 (VTDTLKHFLK…FLNVTERKSK (169 aa)) are large ribosomal subunit protein bL9.

Belongs to the bacterial ribosomal protein bL9 family.

The protein resides in the cell membrane. Functionally, binds to the 23S rRNA. This is Membrane protein-large ribosomal subunit bL9 fusion protein from Onion yellows phytoplasma (strain OY-M).